A 268-amino-acid chain; its full sequence is Sterol uptake protein 2 (268 aa).

It belongs to the SUT1 family.

The protein localises to the nucleus. Functionally, putative transcription factor involved in the regulation of the activity of the cAMP/protein kinase A pathway. Involved in sterol uptake. With SUT1, positively regulates mating by repressing the expression of the mating inhibitors NCE102, PRR2 and RHO5 in response to pheromone. This chain is Sterol uptake protein 2, found in Saccharomyces cerevisiae (strain ATCC 204508 / S288c) (Baker's yeast).